A 307-amino-acid polypeptide reads, in one-letter code: ATP synthase gamma chain (307 aa).

It belongs to the ATPase gamma chain family. In terms of assembly, F-type ATPases have 2 components, CF(1) - the catalytic core - and CF(0) - the membrane proton channel. CF(1) has five subunits: alpha(3), beta(3), gamma(1), delta(1), epsilon(1). CF(0) has three main subunits: a, b and c.

Its subcellular location is the cell membrane. In terms of biological role, produces ATP from ADP in the presence of a proton gradient across the membrane. The gamma chain is believed to be important in regulating ATPase activity and the flow of protons through the CF(0) complex. This is ATP synthase gamma chain from Mycolicibacterium smegmatis (strain ATCC 700084 / mc(2)155) (Mycobacterium smegmatis).